The primary structure comprises 32 residues: Zinc metalloproteinase carinactivase-1 catalytic subunit (32 aa).

Residues 10–32 (FIKLVIVVDHSMVXKXNNDLIAI) enclose the Peptidase M12B domain.

It belongs to the venom metalloproteinase (M12B) family. P-III subfamily. P-IIId sub-subfamily. As to quaternary structure, heterodimer of a metalloproteinase subunit and a regulatory subunit comprising two disulfide-linked lectins (14 kDa and 17 kDa chains) (AC Q9PRP7 and AC Q9PRP8). The cofactor is Zn(2+). Expressed by the venom gland.

Its subcellular location is the secreted. Its function is as follows. Calcium-dependent prothrombin (F2) activator. This protein may activate prothrombin via recognition by the regulatory subunit of the calcium ion bound conformation of its gamma-carboxyglutamic acid (GLA) domain, and the subsequent conversion of prothrombin to active thrombin is catalyzed by the catalytic subunit. This is Zinc metalloproteinase carinactivase-1 catalytic subunit from Echis carinatus (Saw-scaled viper).